We begin with the raw amino-acid sequence, 245 residues long: MPNLQGRVAFVTGGNAGIGYHTVVFLAKAGAKVYFGARSASRAEAAVERMYRENPGLLHGQVNWLQVDMASMKSVLAGCDKFRASESKLNILIHNAAHEGREPSNMADSGVQITMQTNHLAVFAMTQELQPMLRTAAAEKDSDVRIVNVSSNAPSLTHSDEWRPDFSDPHGGDIRYPAGQADGFLAAMKRYSVSKMAMNLLTAELQARYDREGVPIMVISVCPGAVYFKPQVDTENVEEMMRQPT.

NADP(+) contacts are provided by isoleucine 18, arginine 42, aspartate 68, and asparagine 95. Serine 150 serves as the catalytic Proton donor.

Belongs to the short-chain dehydrogenases/reductases (SDR) family.

Its pathway is mycotoxin biosynthesis. Its function is as follows. Short-chain dehydrogenase/reductase; part of the gene cluster that mediates the biosynthesis of the mycotoxin pyrichalasin H, a tyrosine-derived cytochalasan that inhibits the growth of rice seedlings, but also inhibits lymphocyte capping and actin polymerization and alters cell morphology. Pyrichalasin H is indicated as the responsible agent for the genus-specific pathogenicity of M.grisea toward crabgrass. The first step in the pathway is catalyzed by the O-methyltransferase pyiA which methylates free tyrosine to generate the precursor O-methyltyrosine. The hybrid PKS-NRPS pyiS, assisted by the enoyl reductase pyiC, are responsible for fusion of the O-methyltyrosine precursor and the polyketide backbone. The polyketide synthase module (PKS) of pyiS is responsible for the synthesis of the polyketide backbone and the downstream nonribosomal peptide synthetase (NRPS) amidates the carboxyl end of the polyketide with the O-methyltyrosine precursor. As the NRPS A-domain demonstrates substrate tolerance, pyiS can also use phenylalanine, tyrosine and even para-chlorophenylalanine as amino acid precursor, which leads to the production of novel cytochalasans, including halogenated cytochalasans. Because pyiS lacks a designated enoylreductase (ER) domain, the required activity is provided the enoyl reductase pyiC. Reduction by the hydrolyase pyiE leads to 1,5-dihydropyrrolone, which is substrate for dehydration and intra-molecular Diels-Alder cyclization by the Diels-Alderase pyiF to yield the required isoindolone-fused macrocycle. The tailoring cytochrome P450 monooxygenases piyD and piyG catalyze the hydroxylation at C-18 and C-7, respectivily, whereas the short-chain dehydrogenase/reductase pyiH reduces the carbonyl at C-21 in preparation for the transfer of an acetyl group by the acetyltransferase pyiB. These 3 reactions whose order is not clear yet, lead to the production of O-methylpyrichalasin J, a deacetylated pyrichalasin H. Finally, pyiB to converts O-methylpyrichalasin J into the final product pyrichalasin H via acetylation of C-21. The sequence is that of Short-chain dehydrogenase/reductase pyiH from Pyricularia grisea (Crabgrass-specific blast fungus).